The following is a 581-amino-acid chain: MKSHIQSLLEQTIESFKQQGILPADFEARIQVDRTKDKSHGDLATNVAMMLTKAAGKNPRELAQLIIDNLPASAYVAKVEIAGPGFINFFIDDSALANQLQAAIGDEHLGIKLPAPQTVVVDYSSPNLAKEMHVGHLRSTIIGDSVVRTLEFLGHKVIRQNHVGDWGTQFGMLLAYMEELRAANGEQAQLELSDLETFYRAAKLRFDESAEFATRARQLVVALQSGDEYCNKLWREFNDISLSHCHEVYERLGVSLTRADVHGESAYNADLEQVVNDLAAKGLLTESNGAKVVFQEEFRTKEGEPLPVIIQKADGGYLYATTDLAAMRYRSNVLKADRVLYFVDLRQALHFQQVFSLAKLAKFVREDMSLEHLGFGTMNGEDGRPFKTRTGGVVKLVDLLDEANTRALELVRSKNPDMDEATLAEIARVVGISAVKYADLSKNRTSDYIFSFEQMLSFEGNTAPYLLYAYTRVAGIFKRATDVDLSQAKIVLEHEKEKDLGNKLAQFGEILSRVVDKGQPHVLCGYLYELAGAFSSFYEACPVLAADNDEQKHSRLLLSQLTASTLQKGLNLLGIETLERM.

The short motif at 126-136 (PNLAKEMHVGH) is the 'HIGH' region element.

It belongs to the class-I aminoacyl-tRNA synthetase family. Monomer.

The protein resides in the cytoplasm. It catalyses the reaction tRNA(Arg) + L-arginine + ATP = L-arginyl-tRNA(Arg) + AMP + diphosphate. The sequence is that of Arginine--tRNA ligase from Shewanella oneidensis (strain ATCC 700550 / JCM 31522 / CIP 106686 / LMG 19005 / NCIMB 14063 / MR-1).